The sequence spans 663 residues: Protein THEMIS2 (663 aa).

2 CABIT regions span residues 2 to 237 and 238 to 515; these read EPVP…TASS and QHIH…EAEG. The disordered stretch occupies residues 545–663; it reads ASESQAPPPR…DMDDHDYEEI (119 aa). Residues 559–577 are compositionally biased toward polar residues; the sequence is QGINKKQQNIQSCKESSVK. Thr596 is modified (phosphothreonine). Over residues 621-641 the composition is skewed to polar residues; the sequence is NPQTQNSVLSMKPKTSSSLGK. The segment covering 653–663 has biased composition (acidic residues); sequence PDMDDHDYEEI. At Tyr660 the chain carries Phosphotyrosine.

This sequence belongs to the themis family. As to quaternary structure, interacts with VAV1. Interacts with LAT. Interacts constitutively with GRB2, LYN and PLCG2; these interactions increase the activation of PLCG2 and its downstream pathways following B cell receptor stimulation. In terms of processing, phosphorylation at Tyr-660 is induced by LPS. Phosphorylated by Src kinases (Lck or Fyn) following BCR engagement. As to expression, expressed in both developing and mature B-cells with high expression in immature, follicular and B1 B cells. Also expressed in macrophages and dendritic cells. Down-regulated in splenocytes of mice developing arthritis in a collagen-induced model, not in those of mice failing to develop the disease. Transiently down-regulated in splenocytes of mice infected with influenza virus.

The protein resides in the nucleus. It is found in the cytoplasm. Functionally, may constitute a control point in macrophage inflammatory response, promoting LPS-induced TLR4-mediated TNF production. Determines the threshold for activation of B cells by low-affinity and low-avidity ligands via PLCG2 activation and its downstream pathways. This is Protein THEMIS2 from Mus musculus (Mouse).